We begin with the raw amino-acid sequence, 661 residues long: Peroxisomal acyl-coenzyme A oxidase 1 (661 aa).

Residue Ser26 is modified to Phosphoserine. Residue Lys65 is modified to N6-acetyllysine. 2 positions are modified to N6-succinyllysine: Lys89 and Lys90. Thr139 contributes to the FAD binding site. Lys159 carries the N6-succinyllysine modification. Position 178 (Gly178) interacts with FAD. Lys216 carries the N6-acetyllysine modification. The residue at position 241 (Lys241) is an N6-succinyllysine. N6-acetyllysine is present on residues Lys255, Lys267, and Lys272. The residue at position 349 (Lys349) is an N6-succinyllysine. Glu421 functions as the Proton acceptor in the catalytic mechanism. Residues Lys437 and Lys446 each carry the N6-acetyllysine; alternate modification. Residues Lys437 and Lys446 each carry the N6-succinyllysine; alternate modification. Position 500 is an N6-acetyllysine (Lys500). Lys512 carries the N6-acetyllysine; alternate modification. An N6-succinyllysine; alternate modification is found at Lys512. Residue Lys542 is modified to N6-succinyllysine. Lys637 bears the N6-acetyllysine; alternate mark. Lys637 carries the N6-succinyllysine; alternate modification. Residue Lys643 is modified to N6-succinyllysine. Ser649 carries the post-translational modification Phosphoserine. Lys652 carries the N6-acetyllysine modification. The residue at position 655 (Lys655) is an N6-succinyllysine. A Microbody targeting signal motif is present at residues 659–661 (SKL).

This sequence belongs to the acyl-CoA oxidase family. Homodimer. Interacts with LONP2. FAD is required as a cofactor. As to expression, highest levels of isoform 1 are found in liver and kidney while highest levels of isoform 2 are found in white adipose tissue. Isoform 1 is expressed at higher levels than isoform 2 in liver and kidney while isoform 2 is expressed at higher levels in brain, heart, lung, muscle, white adipose tissue and testis.

The protein resides in the peroxisome. It carries out the reaction a 2,3-saturated acyl-CoA + O2 = a (2E)-enoyl-CoA + H2O2. The catalysed reaction is hexadecanoyl-CoA + O2 = (2E)-hexadecenoyl-CoA + H2O2. The enzyme catalyses dodecanoyl-CoA + O2 = (2E)-dodecenoyl-CoA + H2O2. It catalyses the reaction octanoyl-CoA + O2 = (2E)-octenoyl-CoA + H2O2. It carries out the reaction decanoyl-CoA + O2 = (2E)-decenoyl-CoA + H2O2. The catalysed reaction is tetradecanoyl-CoA + O2 = (2E)-tetradecenoyl-CoA + H2O2. The enzyme catalyses hexadecanedioyl-CoA + O2 = (2E)-hexadecenedioyl-CoA + H2O2. It catalyses the reaction tetracosanoyl-CoA + O2 = (2E)-tetracosenoyl-CoA + H2O2. It carries out the reaction glutaryl-CoA + O2 = (2E)-glutaconyl-CoA + H2O2. The catalysed reaction is hexanoyl-CoA + O2 = (2E)-hexenoyl-CoA + H2O2. The enzyme catalyses octadecanoyl-CoA + O2 = (2E)-octadecenoyl-CoA + H2O2. It catalyses the reaction (5Z,8Z,11Z,14Z,17Z)-eicosapentaenoyl-CoA + O2 = (2E,5Z,8Z,11Z,14Z,17Z)-icosahexaenoyl-CoA + H2O2. It carries out the reaction (6Z,9Z,12Z,15Z,18Z,21Z)-tetracosahexaenoyl-CoA + O2 = (2E,6Z,9Z,12Z,15Z,18Z,21Z)-tetracosaheptaenoyl-CoA + H2O2. It functions in the pathway lipid metabolism; peroxisomal fatty acid beta-oxidation. Involved in the initial and rate-limiting step of peroxisomal beta-oxidation of straight-chain saturated and unsaturated very-long-chain fatty acids. Catalyzes the desaturation of fatty acyl-CoAs such as palmitoyl-CoA (hexadecanoyl-CoA) to 2-trans-enoyl-CoAs ((2E)-enoyl-CoAs) such as (2E)-hexadecenoyl-CoA, and donates electrons directly to molecular oxygen (O(2)), thereby producing hydrogen peroxide (H(2)O(2)). Its function is as follows. Shows highest activity against medium-chain fatty acyl-CoAs. Shows optimum activity with a chain length of 10 carbons (decanoyl-CoA) in vitro. Functionally, is active against a much broader range of substrates and shows activity towards long-chain acyl-CoAs. This is Peroxisomal acyl-coenzyme A oxidase 1 from Mus musculus (Mouse).